The following is an 808-amino-acid chain: Protein SEY1 (808 aa).

The interval 1-21 is disordered; it reads MSSELSEGELSHTSSSSSFVP. Over 1-701 the chain is Cytoplasmic; sequence MSSELSEGEL…KRSIVQHITQ (701 aa). The 230-residue stretch at 57–286 folds into the GB1/RHD3-type G domain; sequence GNNYHIISVF…VGDELFKPEY (230 aa). Residue 67 to 74 participates in GTP binding; the sequence is GSQSTGKS. Residues 702–722 form a helical membrane-spanning segment; it reads IPYYIYLVIVFLGWNEFMAII. The Lumenal segment spans residues 723–725; the sequence is RNP. A helical transmembrane segment spans residues 726–746; sequence LLFSLALLLGASVYILYKLNL. The Cytoplasmic portion of the chain corresponds to 747 to 808; sequence LKPAIVVAQR…YSDNIELDDM (62 aa).

Belongs to the TRAFAC class dynamin-like GTPase superfamily. GB1/RHD3 GTPase family. RHD3 subfamily.

The protein resides in the endoplasmic reticulum membrane. In terms of biological role, cooperates with the reticulon proteins and tubule-shaping DP1 family proteins to generate and maintain the structure of the tubular endoplasmic reticulum network. Has GTPase activity, which is required for its function in ER organization. The sequence is that of Protein SEY1 from Candida tropicalis (strain ATCC MYA-3404 / T1) (Yeast).